Here is a 245-residue protein sequence, read N- to C-terminus: 8-amino-3,8-dideoxy-manno-octulosonate cytidylyltransferase (245 aa).

This sequence belongs to the KdsB family.

It is found in the cytoplasm. It carries out the reaction 8-amino-3,8-dideoxy-alpha-D-manno-octulosonate + CTP = CMP-8-amino-3,8-dideoxy-alpha-D-manno-oct-2-ulosonate + diphosphate. It functions in the pathway bacterial outer membrane biogenesis; lipopolysaccharide biosynthesis. Functionally, activates KDO8N (a required 8-carbon sugar) for incorporation into bacterial lipopolysaccharide in the Shewanella genus. The protein is 8-amino-3,8-dideoxy-manno-octulosonate cytidylyltransferase of Shewanella pealeana (strain ATCC 700345 / ANG-SQ1).